The following is a 426-amino-acid chain: 3-phosphoshikimate 1-carboxyvinyltransferase (426 aa).

3 residues coordinate 3-phosphoshikimate: Lys22, Ser23, and Arg27. Lys22 lines the phosphoenolpyruvate pocket. Residues Gly96 and Arg124 each coordinate phosphoenolpyruvate. 3-phosphoshikimate contacts are provided by Ser170, Ser171, Gln172, Ser198, Asp314, Asn337, and Lys341. Residue Gln172 participates in phosphoenolpyruvate binding. Catalysis depends on Asp314, which acts as the Proton acceptor. Residues Arg345, Arg387, and Lys412 each contribute to the phosphoenolpyruvate site.

It belongs to the EPSP synthase family. Monomer.

The protein localises to the cytoplasm. The enzyme catalyses 3-phosphoshikimate + phosphoenolpyruvate = 5-O-(1-carboxyvinyl)-3-phosphoshikimate + phosphate. It functions in the pathway metabolic intermediate biosynthesis; chorismate biosynthesis; chorismate from D-erythrose 4-phosphate and phosphoenolpyruvate: step 6/7. Functionally, catalyzes the transfer of the enolpyruvyl moiety of phosphoenolpyruvate (PEP) to the 5-hydroxyl of shikimate-3-phosphate (S3P) to produce enolpyruvyl shikimate-3-phosphate and inorganic phosphate. This is 3-phosphoshikimate 1-carboxyvinyltransferase from Shewanella sp. (strain MR-7).